We begin with the raw amino-acid sequence, 452 residues long: NADH-quinone oxidoreductase subunit H (452 aa).

Transmembrane regions (helical) follow at residues 28 to 48 (IILIKALAVFVFLMLCVLMMI), 96 to 116 (VIYIAAPMIAAIPAFFAFSVI), 136 to 156 (LPVAVLLVLATASLGVYGIVL), 177 to 197 (VISYEIAMGLSFIAVFIYAGT), 210 to 230 (IWFAVILFPSFVIYLITMIGE), 264 to 286 (AEYVNMVTVSAMSVTLFLGGYLA), 301 to 321 (WWPALWWLIKFVCVMFLFVWV), 335 to 355 (KLGWKILIPIQLVWITAVAVI), and 366 to 386 (YVTAIVVGVFGLLVFLGLWAW).

The protein belongs to the complex I subunit 1 family. NDH-1 is composed of 14 different subunits. Subunits NuoA, H, J, K, L, M, N constitute the membrane sector of the complex.

The protein resides in the cell membrane. The enzyme catalyses a quinone + NADH + 5 H(+)(in) = a quinol + NAD(+) + 4 H(+)(out). Its function is as follows. NDH-1 shuttles electrons from NADH, via FMN and iron-sulfur (Fe-S) centers, to quinones in the respiratory chain. The immediate electron acceptor for the enzyme in this species is believed to be ubiquinone. Couples the redox reaction to proton translocation (for every two electrons transferred, four hydrogen ions are translocated across the cytoplasmic membrane), and thus conserves the redox energy in a proton gradient. This subunit may bind ubiquinone. This chain is NADH-quinone oxidoreductase subunit H, found in Thermobifida fusca (strain YX).